Reading from the N-terminus, the 207-residue chain is Dephospho-CoA kinase (207 aa).

The span at 1–11 (MTRSPAPSSPT) shows a compositional bias: polar residues. Positions 1–21 (MTRSPAPSSPTHPRRLGLTGS) are disordered. The DPCK domain maps to 15–207 (RLGLTGSIGA…DAALRQLEIT (193 aa)). 23–28 (GAGKST) lines the ATP pocket.

Belongs to the CoaE family.

The protein localises to the cytoplasm. It catalyses the reaction 3'-dephospho-CoA + ATP = ADP + CoA + H(+). The protein operates within cofactor biosynthesis; coenzyme A biosynthesis; CoA from (R)-pantothenate: step 5/5. Its function is as follows. Catalyzes the phosphorylation of the 3'-hydroxyl group of dephosphocoenzyme A to form coenzyme A. This Deinococcus radiodurans (strain ATCC 13939 / DSM 20539 / JCM 16871 / CCUG 27074 / LMG 4051 / NBRC 15346 / NCIMB 9279 / VKM B-1422 / R1) protein is Dephospho-CoA kinase.